Consider the following 308-residue polypeptide: tRNA dimethylallyltransferase (308 aa).

14 to 21 contacts ATP; the sequence is GPTASGKT. 16–21 is a substrate binding site; that stretch reads TASGKT. 3 interaction with substrate tRNA regions span residues 39 to 42, 163 to 167, and 244 to 249; these read DSAL, QRLAR, and RCVGYR.

The protein belongs to the IPP transferase family. Monomer. It depends on Mg(2+) as a cofactor.

The catalysed reaction is adenosine(37) in tRNA + dimethylallyl diphosphate = N(6)-dimethylallyladenosine(37) in tRNA + diphosphate. Functionally, catalyzes the transfer of a dimethylallyl group onto the adenine at position 37 in tRNAs that read codons beginning with uridine, leading to the formation of N6-(dimethylallyl)adenosine (i(6)A). This Shewanella piezotolerans (strain WP3 / JCM 13877) protein is tRNA dimethylallyltransferase.